Reading from the N-terminus, the 244-residue chain is Glutathione S-transferase theta-2B (244 aa).

The region spanning 2-82 is the GST N-terminal domain; the sequence is GLELFLDLVS…YLSCKYQTPD (81 aa). Glutathione is bound by residues 40-41, 53-54, 66-67, and 104-107; these read HK, KL, ES, and DCIR. The 137-residue stretch at 88 to 224 folds into the GST C-terminal domain; sequence DLQARARVHE…SILEQAAKKT (137 aa).

This sequence belongs to the GST superfamily. Theta family. In terms of assembly, homodimer. In terms of tissue distribution, expressed at low levels in liver. In lung, expressed at low levels in ciliated bronchiolar cells, alveolar macrophages and alveolar type II cells.

Its subcellular location is the cytoplasm. The protein resides in the cytosol. It carries out the reaction RX + glutathione = an S-substituted glutathione + a halide anion + H(+). Functionally, conjugation of reduced glutathione to a wide number of exogenous and endogenous hydrophobic electrophiles. Has a sulfatase activity. This chain is Glutathione S-transferase theta-2B (GSTT2B), found in Homo sapiens (Human).